The sequence spans 61 residues: Large ribosomal subunit protein uL30 (61 aa).

Belongs to the universal ribosomal protein uL30 family. As to quaternary structure, part of the 50S ribosomal subunit.

The polypeptide is Large ribosomal subunit protein uL30 (Corynebacterium urealyticum (strain ATCC 43042 / DSM 7109)).